The chain runs to 343 residues: Endoglucanase C (343 aa).

Glu-140 (proton donor) is an active-site residue. The Nucleophile role is filled by Glu-280.

It belongs to the glycosyl hydrolase 5 (cellulase A) family.

It carries out the reaction Endohydrolysis of (1-&gt;4)-beta-D-glucosidic linkages in cellulose, lichenin and cereal beta-D-glucans.. Its pathway is glycan metabolism; cellulose degradation. This enzyme catalyzes the endohydrolysis of 1,4-beta-glucosidic linkages in cellulose, lichenin and cereal beta-D-glucans. This Acetivibrio thermocellus (strain ATCC 27405 / DSM 1237 / JCM 9322 / NBRC 103400 / NCIMB 10682 / NRRL B-4536 / VPI 7372) (Clostridium thermocellum) protein is Endoglucanase C (celC).